Consider the following 112-residue polypeptide: Nitrogen regulatory protein P-II (112 aa).

The residue at position 51 (tyrosine 51) is an O-UMP-tyrosine.

This sequence belongs to the P(II) protein family. As to quaternary structure, homotrimer. Uridylylated/deuridylylated by GlnD.

In terms of biological role, P-II indirectly controls the transcription of the glutamine synthetase gene (GlnA). P-II prevents NR-II-catalyzed conversion of NR-I to NR-I-phosphate, the transcriptional activator of GlnA. When P-II is uridylylated to P-II-UMP, these events are reversed. When the ratio of Gln to 2-ketoglutarate decreases, P-II is uridylylated to P-II-UMP, which causes the deadenylation of glutamine synthetase by GlnE, so activating the enzyme. The protein is Nitrogen regulatory protein P-II (glnB) of Haemophilus influenzae (strain ATCC 51907 / DSM 11121 / KW20 / Rd).